The following is a 97-amino-acid chain: Acylphosphatase-2 (97 aa).

Ala-2 carries the post-translational modification N-acetylalanine. The region spanning 7 to 97 (SVDYEVFGTV…LEYSNFSIRY (91 aa)) is the Acylphosphatase-like domain. Catalysis depends on residues Arg-22 and Asn-40. At Ser-91 the chain carries Phosphoserine.

This sequence belongs to the acylphosphatase family.

The catalysed reaction is an acyl phosphate + H2O = a carboxylate + phosphate + H(+). Its function is as follows. Its physiological role is not yet clear. This Rattus norvegicus (Rat) protein is Acylphosphatase-2 (Acyp2).